The following is a 65-amino-acid chain: Temporin-SN1 (65 aa).

The first 22 residues, 1-22 (MFTTKKSLLLLFFLGTINLSLC), serve as a signal peptide directing secretion. A propeptide spans 23–44 (QEERNAEEERRDGDDEGGVEVQ) (removed in mature form). Position 65 is a lysine amide (K65).

Belongs to the frog skin active peptide (FSAP) family. Temporin subfamily. As to expression, expressed by the skin glands.

It is found in the secreted. Functionally, antimicrobial peptide. Active against a variety of Gram-positive bacterial strains. Not active against Gram-negative bacteria and against fungi. Shows hemolytic activity against human erythrocytes. The chain is Temporin-SN1 from Sylvirana spinulosa (Fine-spined frog).